A 576-amino-acid polypeptide reads, in one-letter code: Polyphenol oxidase 3 (576 aa).

Cu cation contacts are provided by His-61, His-85, His-94, His-259, His-263, and His-296. The segment at residues 83–85 (CTH) is a cross-link (2'-(S-cysteinyl)-histidine (Cys-His)). His-263 provides a ligand contact to substrate. Positions 393–576 (FVTTQTENPA…ILDDIIHRVN (184 aa)) are cleaved as a propeptide — removed in mature form.

It belongs to the tyrosinase family. As to quaternary structure, tetramer composed of two subunits of PPO3 (H subunits) and two subunits of the as yet uncharacterized product of ORF239342 (L subunits). Requires Cu(2+) as cofactor. In terms of processing, the C-ter is probably cleaved after Gly-392 since the mature active protein is smaller than the protein encoded by the gene.

It catalyses the reaction 2 L-dopa + O2 = 2 L-dopaquinone + 2 H2O. It carries out the reaction L-tyrosine + O2 = L-dopaquinone + H2O. Its function is as follows. Copper-containing oxidase that catalyzes both the o-hydroxylation of monophenols and the subsequent oxidation of the resulting o-diphenols into reactive o-quinones, which evolve spontaneously to produce intermediates, which associate in dark brown pigments. Involved in the initial step of melanin synthesis. Melanins constitute a mechanism of defense and resistance to stress such as UV radiations, free radicals, gamma rays, dehydratation and extreme temperatures, and contribute to the fungal cell-wall resistance against hydrolytic enzymes in avoiding cellular lysis. Fungal pigments are also involved in the formation and stability of spores. In Agaricus bisporus (White button mushroom), this protein is Polyphenol oxidase 3 (PPO3).